The primary structure comprises 89 residues: Cell division topological specificity factor (89 aa).

It belongs to the MinE family.

In terms of biological role, prevents the cell division inhibition by proteins MinC and MinD at internal division sites while permitting inhibition at polar sites. This ensures cell division at the proper site by restricting the formation of a division septum at the midpoint of the long axis of the cell. In Laribacter hongkongensis (strain HLHK9), this protein is Cell division topological specificity factor.